Reading from the N-terminus, the 441-residue chain is Endothelin receptor type B (441 aa).

The signal sequence occupies residues 1 to 26; that stretch reads MQPLPSLCGRALVALILACGVAGIQA. Residues 27-100 are Extracellular-facing; that stretch reads EEREFPPAGA…GPIEIKETFK (74 aa). Positions 30-87 are disordered; sequence EFPPAGATQPLPGTGEMMETPTETSWPGRSNASDPRSSATPQIPRGGRMAGIPPRTPP. Residues 41–53 show a composition bias toward low complexity; it reads PGTGEMMETPTET. The span at 54–70 shows a compositional bias: polar residues; the sequence is SWPGRSNASDPRSSATP. A helical membrane pass occupies residues 101 to 125; that stretch reads YINTVVSCLVFVLGIIGNSTLLRII. The Cytoplasmic segment spans residues 126-136; that stretch reads YKNKCMRNGPN. Residues 137–162 form a helical membrane-spanning segment; it reads ILIASLALGDLLHIIIDIPINTYKLL. At 163–174 the chain is on the extracellular side; sequence AKDWPFGVEMCK. The cysteines at positions 173 and 254 are disulfide-linked. The helical transmembrane segment at 175-196 threads the bilayer; it reads LVPFIQKASVGITVLSLCALSI. The Cytoplasmic portion of the chain corresponds to 197–217; that stretch reads DRYRAVASWSRIKGIGVPKWT. A helical membrane pass occupies residues 218–242; that stretch reads AVEIVLIWVVSVVLAVPEAVGFDII. The Extracellular portion of the chain corresponds to 243–270; that stretch reads TSDHIGNKLRICLLHPTQKTAFMQFYKT. Residues 271–295 traverse the membrane as a helical segment; the sequence is AKDWWLFSFYFCLPLAITALFYTLM. At 296-323 the chain is on the cytoplasmic side; sequence TCEMLRKKSGMQIALNDHLKQRREVAKT. Serine 304 is subject to Phosphoserine. Residues 324-349 form a helical membrane-spanning segment; that stretch reads VFCLVLVFALCWLPLHLSRILKLTLY. At 350-361 the chain is on the extracellular side; that stretch reads DQHDPRRCEFLS. The helical transmembrane segment at 362–388 threads the bilayer; that stretch reads FLLVLDYIGINMASLNSCINPIALYLV. The Cytoplasmic portion of the chain corresponds to 389 to 441; the sequence is SKRFKNCFKSCLCCWCQSFEEKQSLEEKQSCLKFKANDHGYDNFRSSNKYSSS. Residues cysteine 402 and cysteine 404 are each lipidated (S-palmitoyl cysteine). A phosphoserine mark is found at serine 418, serine 434, and serine 435. The residue at position 438 (tyrosine 438) is a Phosphotyrosine. Residues serine 439, serine 440, and serine 441 each carry the phosphoserine modification.

Belongs to the G-protein coupled receptor 1 family. Endothelin receptor subfamily. EDNRB sub-subfamily. Post-translationally, it is not sure whether phosphorylation is on Ser-434 or Ser-435.

The protein resides in the cell membrane. In terms of biological role, non-specific receptor for endothelin 1, 2, and 3. Mediates its action by association with G proteins that activate a phosphatidylinositol-calcium second messenger system. The polypeptide is Endothelin receptor type B (EDNRB) (Bos taurus (Bovine)).